The primary structure comprises 817 residues: LisH domain-containing protein ARMC9 (817 aa).

The LisH domain maps to 15 to 47; that stretch reads SESDLLSMISEYLKFGEFEETARTFEKEVKRKG. 3 disordered regions span residues 580–605, 610–629, and 642–817; these read SATI…EEDV, LDKE…ESLL, and KTKR…SNRK. Positions 586 to 605 are enriched in acidic residues; sequence QEPESDDEEDEDDDDDEEDV. 2 stretches are compositionally biased toward polar residues: residues 692–715 and 740–750; these read SSRP…TLAT and GQTTNSVQSYS. The span at 805–817 shows a compositional bias: low complexity; that stretch reads GRPSQQSSQSNRK.

Expressed in multiple CNS regions, including the cerebellum, all periventricular regions, and all layers of the retina.

The protein resides in the cytoplasm. Its subcellular location is the cytoskeleton. It is found in the cilium basal body. It localises to the cell projection. The protein localises to the cilium. The protein resides in the microtubule organizing center. Its subcellular location is the centrosome. It is found in the centriole. Its function is as follows. Involved in ciliogenesis. It is required for appropriate acetylation and polyglutamylation of ciliary microtubules, and regulation of cilium length. Acts as a positive regulator of hedgehog (Hh) signaling. This Danio rerio (Zebrafish) protein is LisH domain-containing protein ARMC9 (armc9).